The following is a 439-amino-acid chain: Alpha-1,3-mannosyl-glycoprotein 4-beta-N-acetylglucosaminyltransferase-like protein MGAT4E (439 aa).

The protein operates within protein modification; protein glycosylation. Functionally, glycosyltransferase-like protein that may participate in the transfer of N-acetylglucosamine (GlcNAc) to the core mannose residues of N-linked glycans. The sequence is that of Alpha-1,3-mannosyl-glycoprotein 4-beta-N-acetylglucosaminyltransferase-like protein MGAT4E from Mus musculus (Mouse).